A 359-amino-acid chain; its full sequence is Heat-inducible transcription repressor HrcA (359 aa).

This sequence belongs to the HrcA family.

Functionally, negative regulator of class I heat shock genes (grpE-dnaK-dnaJ and groELS operons). Prevents heat-shock induction of these operons. This is Heat-inducible transcription repressor HrcA from Sinorhizobium fredii (strain NBRC 101917 / NGR234).